The primary structure comprises 86 residues: Small ribosomal subunit protein bS20 (86 aa).

Belongs to the bacterial ribosomal protein bS20 family.

Binds directly to 16S ribosomal RNA. The polypeptide is Small ribosomal subunit protein bS20 (Kocuria rhizophila (strain ATCC 9341 / DSM 348 / NBRC 103217 / DC2201)).